Consider the following 261-residue polypeptide: tRNA pseudouridine synthase A 2 (261 aa).

The Nucleophile role is filled by aspartate 59. Tyrosine 117 contacts substrate.

It belongs to the tRNA pseudouridine synthase TruA family. In terms of assembly, homodimer.

It carries out the reaction uridine(38/39/40) in tRNA = pseudouridine(38/39/40) in tRNA. In terms of biological role, formation of pseudouridine at positions 38, 39 and 40 in the anticodon stem and loop of transfer RNAs. The protein is tRNA pseudouridine synthase A 2 of Desulfotalea psychrophila (strain LSv54 / DSM 12343).